We begin with the raw amino-acid sequence, 101 residues long: Small ribosomal subunit protein bS18c (101 aa).

The protein belongs to the bacterial ribosomal protein bS18 family. Part of the 30S ribosomal subunit.

It is found in the plastid. It localises to the chloroplast. The protein is Small ribosomal subunit protein bS18c of Nymphaea alba (White water-lily).